The sequence spans 465 residues: ATP synthase subunit beta (465 aa).

152 to 159 serves as a coordination point for ATP; it reads GGAGVGKT.

The protein belongs to the ATPase alpha/beta chains family. As to quaternary structure, F-type ATPases have 2 components, CF(1) - the catalytic core - and CF(0) - the membrane proton channel. CF(1) has five subunits: alpha(3), beta(3), gamma(1), delta(1), epsilon(1). CF(0) has three main subunits: a(1), b(2) and c(9-12). The alpha and beta chains form an alternating ring which encloses part of the gamma chain. CF(1) is attached to CF(0) by a central stalk formed by the gamma and epsilon chains, while a peripheral stalk is formed by the delta and b chains.

Its subcellular location is the cell inner membrane. It catalyses the reaction ATP + H2O + 4 H(+)(in) = ADP + phosphate + 5 H(+)(out). Produces ATP from ADP in the presence of a proton gradient across the membrane. The catalytic sites are hosted primarily by the beta subunits. This is ATP synthase subunit beta from Campylobacter hominis (strain ATCC BAA-381 / DSM 21671 / CCUG 45161 / LMG 19568 / NCTC 13146 / CH001A).